The sequence spans 75 residues: Peptide Ctri10033 (75 aa).

An N-terminal signal peptide occupies residues 1–22; it reads MNSKYLFVFLILIVTFTDLCQG. Arg-43 is modified (arginine amide). Residues 47–75 constitute a propeptide that is removed on maturation; the sequence is ELGSQYDYLQDFRKRELDLDDLLSKFPDY.

This sequence belongs to the non-disulfide-bridged peptide (NDBP) superfamily. Short antimicrobial peptide (group 4) family. In terms of tissue distribution, expressed by the venom gland.

Its subcellular location is the secreted. In Chaerilus tricostatus (Scorpion), this protein is Peptide Ctri10033.